A 927-amino-acid chain; its full sequence is Clumping factor A (927 aa).

A signal peptide spans 1-39 (MNMKKKEKHAIRKKSIGVASVLVGTLIGFGLLSSKEADA). The YSIRK-G/S signaling motif motif lies at 9–20 (HAIRKKSIGVAS). Disordered stretches follow at residues 34–200 (SKEA…SNKD) and 529–898 (FNNG…SEDE). Positions 40-542 (SENSVTQSDS…SGSGDGIDKP (503 aa)) are ligand binding A region. Positions 47–65 (SDSASNESKSNDSSSVSAA) are enriched in low complexity. Positions 71 to 105 (TNVSDTKTSSNTNNGETSVAQNPAQQETTQSSSTN) are enriched in polar residues. 2 stretches are compositionally biased toward low complexity: residues 106 to 132 (ATTEETPVTGEATTTTTNQANTPATTQ) and 143 to 162 (NQTSNETTSNDTNTVSSVNS). Residues 163 to 200 (PQNSTNAENVSTTQDTSTEATPSNNESAPQSTDASNKD) show a composition bias toward polar residues. Over residues 547–565 (QPDEPGEIEPIPEDSDSDP) the composition is skewed to acidic residues. Residues 566 to 598 (GSDSGSDSNSDSGSDSGSDSTSDSGSDSASDSD) are compositionally biased toward low complexity. A compositionally biased stretch (acidic residues) spans 599-855 (SASDSDSASD…DSDSESDSNS (257 aa)). The span at 856 to 867 (DSESVSNNNVVP) shows a compositional bias: low complexity. The span at 881-890 (NEAKDSKEPL) shows a compositional bias: basic and acidic residues. Residues 890-894 (LPDTG) carry the LPXTG sorting signal motif. Residue threonine 893 is modified to Pentaglycyl murein peptidoglycan amidated threonine. Residues 894–927 (GSEDEANTSLIWGLLASIGSLLLFRRKKENKDKK) constitute a propeptide, removed by sortase.

It belongs to the serine-aspartate repeat-containing protein (SDr) family.

It localises to the secreted. The protein localises to the cell wall. Its function is as follows. Cell surface-associated protein implicated in virulence. Promotes bacterial attachment exclusively to the gamma-chain of human fibrinogen. Induces formation of bacterial clumps, which diminish the ability of group IIA phospholipase A2 to cause bacterial phospholipid hydrolysis and killing. Significantly decreases macrophage phagocytosis possibly thanks to the clumps, clumped bacteria being too large to be phagocytosed. Dominant factor responsible for human platelet aggregation, which may be an important mechanism for initiating infective endocarditis. Enhances spleen cell proliferative response in vitro, contributing significantly to the immunostimulatory activity of S.aureus. The polypeptide is Clumping factor A (clfA) (Staphylococcus aureus (strain NCTC 8325 / PS 47)).